The primary structure comprises 785 residues: Phenylalanine--tRNA ligase beta subunit (785 aa).

The tRNA-binding domain occupies 39–148 (APAFSGVVIA…ADAPVGQSIR (110 aa)). The B5 domain maps to 399-474 (PKRQAVQLRA…RVYGYNNIPA (76 aa)). 4 residues coordinate Mg(2+): aspartate 452, aspartate 458, glutamate 461, and glutamate 462. The FDX-ACB domain maps to 692–784 (SKFQPVRRDL…AASELGAQLR (93 aa)).

Belongs to the phenylalanyl-tRNA synthetase beta subunit family. Type 1 subfamily. Tetramer of two alpha and two beta subunits. The cofactor is Mg(2+).

It localises to the cytoplasm. The catalysed reaction is tRNA(Phe) + L-phenylalanine + ATP = L-phenylalanyl-tRNA(Phe) + AMP + diphosphate + H(+). In Chromobacterium violaceum (strain ATCC 12472 / DSM 30191 / JCM 1249 / CCUG 213 / NBRC 12614 / NCIMB 9131 / NCTC 9757 / MK), this protein is Phenylalanine--tRNA ligase beta subunit.